The following is a 247-amino-acid chain: tRNA uridine(34) hydroxylase (247 aa).

The region spanning 124–218 (TKQNVIVIDT…YLEDTQNKNN (95 aa)) is the Rhodanese domain. The Cysteine persulfide intermediate role is filled by C178.

This sequence belongs to the TrhO family.

The catalysed reaction is uridine(34) in tRNA + AH2 + O2 = 5-hydroxyuridine(34) in tRNA + A + H2O. In terms of biological role, catalyzes oxygen-dependent 5-hydroxyuridine (ho5U) modification at position 34 in tRNAs. The sequence is that of tRNA uridine(34) hydroxylase from Rickettsia akari (strain Hartford).